A 328-amino-acid polypeptide reads, in one-letter code: Homeobox protein Hox-D1 (328 aa).

The short motif at 204 to 209 (TFEWMK) is the Antp-type hexapeptide element. Positions 229–288 (SSAIRTNFSTKQLTELEKEFHFNKYLTRARRIEIANCLHLNDTQVKIWFQNRRMKQKKRE) form a DNA-binding region, homeobox. A disordered region spans residues 305–328 (PLSGTTPTKFIKNPGSPSQSQEPS). Over residues 319-328 (GSPSQSQEPS) the composition is skewed to polar residues.

It belongs to the Antp homeobox family. Labial subfamily.

Its subcellular location is the nucleus. Functionally, sequence-specific transcription factor which is part of a developmental regulatory system that provides cells with specific positional identities on the anterior-posterior axis. Acts on the anterior body structures. The chain is Homeobox protein Hox-D1 (HOXD1) from Homo sapiens (Human).